A 377-amino-acid polypeptide reads, in one-letter code: N-acetylgalactosamine-6-phosphate deacetylase (377 aa).

E125 serves as a coordination point for a divalent metal cation. 136–137 provides a ligand contact to substrate; sequence AH. 2 residues coordinate a divalent metal cation: H191 and H212. Substrate-binding positions include 215–216, R223, and 244–247; these read NG and DGHH. Catalysis depends on D269, which acts as the Proton donor/acceptor. Substrate is bound at residue 302–304; it reads LAG.

The protein belongs to the metallo-dependent hydrolases superfamily. NagA family. Requires a divalent metal cation as cofactor.

It catalyses the reaction N-acetyl-D-galactosamine 6-phosphate + H2O = D-galactosamine 6-phosphate + acetate. In terms of biological role, catalyzes the deacetylation of N-acetyl-D-galactosamine 6-phosphate to D-galactosamine 6-phosphate. Can probably also catalyze the deacetylation of N-acetyl-D-glucosamine 6-phosphate to D-glucosamine 6-phosphate. This Escherichia coli O157:H7 protein is N-acetylgalactosamine-6-phosphate deacetylase (agaA).